The primary structure comprises 665 residues: non-specific serine/threonine protein kinase (665 aa).

The 453-residue stretch at 145–597 folds into the Protein kinase domain; the sequence is FDVHCRIGSG…AEEALKHPFF (453 aa). ATP contacts are provided by residues 151-159 and Lys181; that span reads IGSGTFSTV. The active-site Proton acceptor is Asp268.

Belongs to the protein kinase superfamily. Ser/Thr protein kinase family. Interacts with chif (via N-terminus).

It catalyses the reaction L-seryl-[protein] + ATP = O-phospho-L-seryl-[protein] + ADP + H(+). The catalysed reaction is L-threonyl-[protein] + ATP = O-phospho-L-threonyl-[protein] + ADP + H(+). Functionally, probable serine/threonine protein kinase that forms a complex with the N-terminal peptide of the chiffon protein and may be involved in regulating meiotic processes in the male testis. The sequence is that of non-specific serine/threonine protein kinase from Drosophila melanogaster (Fruit fly).